The following is a 283-amino-acid chain: MQIFGKILGGFFGFLFGGFFGAALGIFIGHQFDKAKRMANSGFTFQTGGASQTQRQAEFFHAAYAVMGHVAKAKGQVTREEIQLASMMMDRMNLSDEQKREAQEAFREGKESDFPLRETLRNIRSITGGRYDLLQFFLELQIAAAIADGDIHPSERDVLHIVAEELGFSAEQLEKRLRMQEAAFRFQQGGGFSGHQSGGSHQQGQWQQASSASQLKDAYNLLGISEDADPKTIKRAHRKLMNEHHPDKLVAKGLPPEMMNMAKEKAQEIQAAYDLIKKEKGIK.

The Periplasmic portion of the chain corresponds to 1–6 (MQIFGK). A helical membrane pass occupies residues 7 to 30 (ILGGFFGFLFGGFFGAALGIFIGH). Over 31–283 (QFDKAKRMAN…DLIKKEKGIK (253 aa)) the chain is Cytoplasmic. Positions 188–197 (QGGGFSGHQS) are enriched in gly residues. The disordered stretch occupies residues 188–210 (QGGGFSGHQSGGSHQQGQWQQAS). A compositionally biased stretch (low complexity) spans 198-210 (GGSHQQGQWQQAS). The J domain maps to 217–283 (DAYNLLGISE…DLIKKEKGIK (67 aa)).

As to quaternary structure, homodimer.

The protein localises to the cell inner membrane. Its function is as follows. Regulatory DnaK co-chaperone. Direct interaction between DnaK and DjlA is needed for the induction of the wcaABCDE operon, involved in the synthesis of a colanic acid polysaccharide capsule, possibly through activation of the RcsB/RcsC phosphotransfer signaling pathway. The colanic acid capsule may help the bacterium survive conditions outside the host. The sequence is that of Co-chaperone protein DjlA from Aliivibrio fischeri (strain ATCC 700601 / ES114) (Vibrio fischeri).